A 278-amino-acid chain; its full sequence is tRNA pseudouridine synthase A (278 aa).

The active-site Nucleophile is the aspartate 51. Residue tyrosine 109 coordinates substrate.

The protein belongs to the tRNA pseudouridine synthase TruA family. In terms of assembly, homodimer.

It carries out the reaction uridine(38/39/40) in tRNA = pseudouridine(38/39/40) in tRNA. Its function is as follows. Formation of pseudouridine at positions 38, 39 and 40 in the anticodon stem and loop of transfer RNAs. The sequence is that of tRNA pseudouridine synthase A from Paracidovorax citrulli (strain AAC00-1) (Acidovorax citrulli).